The following is an 89-amino-acid chain: Small ribosomal subunit protein uS15 (89 aa).

Residues 1-21 (MAITQERKNQLINEFKTHESD) show a composition bias toward basic and acidic residues. Positions 1 to 24 (MAITQERKNQLINEFKTHESDTGS) are disordered.

Belongs to the universal ribosomal protein uS15 family. Part of the 30S ribosomal subunit. Forms a bridge to the 50S subunit in the 70S ribosome, contacting the 23S rRNA.

In terms of biological role, one of the primary rRNA binding proteins, it binds directly to 16S rRNA where it helps nucleate assembly of the platform of the 30S subunit by binding and bridging several RNA helices of the 16S rRNA. Functionally, forms an intersubunit bridge (bridge B4) with the 23S rRNA of the 50S subunit in the ribosome. This Bacillus subtilis (strain 168) protein is Small ribosomal subunit protein uS15.